A 310-amino-acid polypeptide reads, in one-letter code: Isoflavone reductase homolog P3 (310 aa).

Residues 12-18 (GGTGYIG), Arg37, and Lys46 each bind NADP(+). Lys134 functions as the Proton acceptor in the catalytic mechanism. Arg138 is a binding site for NADP(+).

It belongs to the NmrA-type oxidoreductase family. Isoflavone reductase subfamily.

It localises to the cytoplasm. The polypeptide is Isoflavone reductase homolog P3 (Arabidopsis thaliana (Mouse-ear cress)).